Here is a 177-residue protein sequence, read N- to C-terminus: Large ribosomal subunit protein uL5 (177 aa).

Belongs to the universal ribosomal protein uL5 family. Part of the 50S ribosomal subunit; part of the 5S rRNA/L5/L18/L25 subcomplex. Contacts the 5S rRNA and the P site tRNA. Forms a bridge to the 30S subunit in the 70S ribosome.

This is one of the proteins that bind and probably mediate the attachment of the 5S RNA into the large ribosomal subunit, where it forms part of the central protuberance. In the 70S ribosome it contacts protein S13 of the 30S subunit (bridge B1b), connecting the 2 subunits; this bridge is implicated in subunit movement. Contacts the P site tRNA; the 5S rRNA and some of its associated proteins might help stabilize positioning of ribosome-bound tRNAs. The sequence is that of Large ribosomal subunit protein uL5 from Neorickettsia sennetsu (strain ATCC VR-367 / Miyayama) (Ehrlichia sennetsu).